A 360-amino-acid polypeptide reads, in one-letter code: Photosystem II protein D1 (360 aa).

Transmembrane regions (helical) follow at residues 30 to 47 (YVGWFGVLMIPCLLAATT), 119 to 134 (HFLIGISAYMGRQWEL), and 143 to 157 (WICVAYSAPVSAAFA). Histidine 119 contributes to the chlorophyll a binding site. Position 127 (tyrosine 127) interacts with pheophytin a. Residues aspartate 171 and glutamate 190 each contribute to the [CaMn4O5] cluster site. Residues 198 to 219 (FHMAGVAGMFGGALFSAMHGSL) form a helical membrane-spanning segment. A chlorophyll a-binding site is contributed by histidine 199. A quinone contacts are provided by residues histidine 216 and 265 to 266 (SF). Histidine 216 contributes to the Fe cation binding site. Residue histidine 273 participates in Fe cation binding. The helical transmembrane segment at 275–289 (FLASWPVICVWLTSM) threads the bilayer. Positions 333, 334, 343, and 345 each coordinate [CaMn4O5] cluster. Residues 346–360 (AAESTSVALVAPAIG) constitute a propeptide that is removed on maturation.

Belongs to the reaction center PufL/M/PsbA/D family. PSII is composed of 1 copy each of membrane proteins PsbA, PsbB, PsbC, PsbD, PsbE, PsbF, PsbH, PsbI, PsbJ, PsbK, PsbL, PsbM, PsbT, PsbX, PsbY, Psb30/Ycf12, peripheral proteins PsbO, CyanoQ (PsbQ), PsbU, PsbV and a large number of cofactors. It forms dimeric complexes. Requires The D1/D2 heterodimer binds P680, chlorophylls that are the primary electron donor of PSII, and subsequent electron acceptors. It shares a non-heme iron and each subunit binds pheophytin, quinone, additional chlorophylls, carotenoids and lipids. D1 provides most of the ligands for the Mn4-Ca-O5 cluster of the oxygen-evolving complex (OEC). There is also a Cl(-1) ion associated with D1 and D2, which is required for oxygen evolution. The PSII complex binds additional chlorophylls, carotenoids and specific lipids. as cofactor. Post-translationally, tyr-162 forms a radical intermediate that is referred to as redox-active TyrZ, YZ or Y-Z. C-terminally processed by CtpA; processing is essential to allow assembly of the oxygen-evolving complex and thus photosynthetic growth.

Its subcellular location is the cellular thylakoid membrane. The enzyme catalyses 2 a plastoquinone + 4 hnu + 2 H2O = 2 a plastoquinol + O2. Photosystem II (PSII) is a light-driven water:plastoquinone oxidoreductase that uses light energy to abstract electrons from H(2)O, generating O(2) and a proton gradient subsequently used for ATP formation. It consists of a core antenna complex that captures photons, and an electron transfer chain that converts photonic excitation into a charge separation. The D1/D2 (PsbA/PsbD) reaction center heterodimer binds P680, the primary electron donor of PSII as well as several subsequent electron acceptors. The chain is Photosystem II protein D1 from Prochlorococcus marinus (strain NATL1A).